A 273-amino-acid chain; its full sequence is MTTVSTAAASGPAVPPPRIDPDVPAKVAARNLNFYYGQHHALKNINLSIAANRVTAFIGPSGCGKSTLLRIFNRMYDLYPGQRVEGRVLLDDTDILDPKLDLNLLRARVGMVFQKPTPFPMTIYENIAFGIRLYEKLPKSEMDSRVEKALRDGALWTEVKDKLNASGLSLSGGQQQRLCIARTVAVRPEVILFDEPCSALDPISTAKVEELIDELKTHYTIAIVTHNMQQAARVSDYTSFMYLGEMIEFGPTDKLFTSPSDRRTQDYITGRFG.

Positions 1 to 20 (MTTVSTAAASGPAVPPPRID) are disordered. An ABC transporter domain is found at 27 to 268 (VAARNLNFYY…PSDRRTQDYI (242 aa)). An ATP-binding site is contributed by 59–66 (GPSGCGKS).

This sequence belongs to the ABC transporter superfamily. Phosphate importer (TC 3.A.1.7) family. The complex is composed of two ATP-binding proteins (PstB), two transmembrane proteins (PstC and PstA) and a solute-binding protein (PstS).

The protein localises to the cell inner membrane. It carries out the reaction phosphate(out) + ATP + H2O = ADP + 2 phosphate(in) + H(+). Functionally, part of the ABC transporter complex PstSACB involved in phosphate import. Responsible for energy coupling to the transport system. The chain is Phosphate import ATP-binding protein PstB from Nitrobacter winogradskyi (strain ATCC 25391 / DSM 10237 / CIP 104748 / NCIMB 11846 / Nb-255).